Consider the following 282-residue polypeptide: Caspase-3 (282 aa).

Residues His131 and Cys174 contribute to the active site.

The protein belongs to the peptidase C14A family. As to quaternary structure, heterotetramer that consists of two anti-parallel arranged heterodimers, each one formed by a 17 kDa (p17) and a 12 kDa (p12) subunit.

The protein localises to the cytoplasm. It carries out the reaction Strict requirement for an Asp residue at positions P1 and P4. It has a preferred cleavage sequence of Asp-Xaa-Xaa-Asp-|- with a hydrophobic amino-acid residue at P2 and a hydrophilic amino-acid residue at P3, although Val or Ala are also accepted at this position.. Important mediator of apoptosis. At the onset of apoptosis, it proteolytically cleaves poly(ADP-ribose) polymerase PARP1 at a '216-Asp-|-Gly-217' bond. This is Caspase-3 (casp3) from Xenopus laevis (African clawed frog).